Here is a 514-residue protein sequence, read N- to C-terminus: Type-2 serine--tRNA ligase (514 aa).

Ala313 is an L-serine binding site. Cys315 contributes to the Zn(2+) binding site. Arg344 provides a ligand contact to L-serine. Residues 344–346 (RWE) and 355–356 (RV) contribute to the ATP site. 361-363 (RGE) serves as a coordination point for L-serine. Glu363 and Cys470 together coordinate Zn(2+). Residue Arg477 participates in ATP binding.

This sequence belongs to the class-II aminoacyl-tRNA synthetase family. Type-2 seryl-tRNA synthetase subfamily. In terms of assembly, homodimer. It depends on Zn(2+) as a cofactor.

It is found in the cytoplasm. The catalysed reaction is tRNA(Ser) + L-serine + ATP = L-seryl-tRNA(Ser) + AMP + diphosphate + H(+). It catalyses the reaction tRNA(Sec) + L-serine + ATP = L-seryl-tRNA(Sec) + AMP + diphosphate + H(+). Its pathway is aminoacyl-tRNA biosynthesis; selenocysteinyl-tRNA(Sec) biosynthesis; L-seryl-tRNA(Sec) from L-serine and tRNA(Sec): step 1/1. Functionally, catalyzes the attachment of serine to tRNA(Ser). Is also able to aminoacylate tRNA(Sec) with serine, to form the misacylated tRNA L-seryl-tRNA(Sec), which will be further converted into selenocysteinyl-tRNA(Sec). The protein is Type-2 serine--tRNA ligase of Methanococcus maripaludis (strain C7 / ATCC BAA-1331).